The chain runs to 86 residues: Toxin Cn1 (86 aa).

An N-terminal signal peptide occupies residues 1-19; that stretch reads MNSLLMITACFVLIGTVWA. Residues 20-84 form the LCN-type CS-alpha/beta domain; sequence KDGYLVDAKG…TWPLPNKTCS (65 aa). 4 cysteine pairs are disulfide-bonded: Cys30–Cys83, Cys34–Cys59, Cys43–Cys64, and Cys47–Cys66. At Ser84 the chain carries Serine amide.

The protein belongs to the long (4 C-C) scorpion toxin superfamily. Sodium channel inhibitor family. Beta subfamily. In terms of tissue distribution, expressed by the venom gland.

It localises to the secreted. Beta toxins bind voltage-independently at site-4 of sodium channels (Nav) and shift the voltage of activation toward more negative potentials thereby affecting sodium channel activation and promoting spontaneous and repetitive firing. The sequence is that of Toxin Cn1 from Centruroides noxius (Mexican scorpion).